We begin with the raw amino-acid sequence, 275 residues long: Large ribosomal subunit protein uL2 (275 aa).

Disordered stretches follow at residues Lys-36–Gly-55 and Val-223–Arg-275. A compositionally biased stretch (polar residues) spans Lys-39 to Arg-48. The span at Asp-229–Thr-239 shows a compositional bias: basic and acidic residues.

Belongs to the universal ribosomal protein uL2 family. As to quaternary structure, part of the 50S ribosomal subunit. Forms a bridge to the 30S subunit in the 70S ribosome.

In terms of biological role, one of the primary rRNA binding proteins. Required for association of the 30S and 50S subunits to form the 70S ribosome, for tRNA binding and peptide bond formation. It has been suggested to have peptidyltransferase activity; this is somewhat controversial. Makes several contacts with the 16S rRNA in the 70S ribosome. In Aromatoleum aromaticum (strain DSM 19018 / LMG 30748 / EbN1) (Azoarcus sp. (strain EbN1)), this protein is Large ribosomal subunit protein uL2.